We begin with the raw amino-acid sequence, 199 residues long: DnaJ homolog subfamily C member 5B (199 aa).

Phosphoserine occurs at positions 14 and 16. The J domain occupies 19 to 84 (SLYEILGLHK…SKRNIYDKYG (66 aa)).

As to quaternary structure, interacts with the chaperone complex consisting of HSC70 and SGTA. In terms of processing, palmitoylated.

It is found in the membrane. The chain is DnaJ homolog subfamily C member 5B (Dnajc5b) from Mus musculus (Mouse).